The sequence spans 523 residues: Cyclin-dependent kinase 17 (523 aa).

Serine 9 carries the post-translational modification Phosphoserine. A disordered region spans residues 30–55; that stretch reads TIEENSSKDNEPIVKNGRPPTSHSMH. Phosphoserine is present on residues serine 80, serine 92, and serine 105. The disordered stretch occupies residues 103–123; it reads MGSDGESDQASGTSSDEVQSP. A compositionally biased stretch (polar residues) spans 110–123; sequence DQASGTSSDEVQSP. Serine 137, serine 146, serine 165, and serine 180 each carry phosphoserine. Residues 192-473 form the Protein kinase domain; the sequence is YIKLEKLGEG…AEEAMKHVYF (282 aa). ATP contacts are provided by residues 198–206 and lysine 221; that span reads LGEGTYATV. Catalysis depends on aspartate 313, which acts as the Proton acceptor. The disordered stretch occupies residues 501–523; sequence PGFRNSSYPETGHGKNRRQSMLF. Residues 514–523 show a composition bias toward basic residues; sequence GKNRRQSMLF.

This sequence belongs to the protein kinase superfamily. CMGC Ser/Thr protein kinase family. CDC2/CDKX subfamily. As to quaternary structure, found in a complex containing CABLES1, CDK16 and TDRD7. Interacts with TDRD7.

It carries out the reaction L-seryl-[protein] + ATP = O-phospho-L-seryl-[protein] + ADP + H(+). It catalyses the reaction L-threonyl-[protein] + ATP = O-phospho-L-threonyl-[protein] + ADP + H(+). Its function is as follows. May play a role in terminally differentiated neurons. Has a Ser/Thr-phosphorylating activity for histone H1. This chain is Cyclin-dependent kinase 17 (CDK17), found in Homo sapiens (Human).